Reading from the N-terminus, the 397-residue chain is Teichoic acid D-alanine hydrolase (397 aa).

Positions Met-1–Ala-23 are cleaved as a signal peptide.

The protein localises to the cell membrane. The catalysed reaction is [(4-D-Ala)-(2-GlcNAc)-Rib-ol-P]n-[Gro-P]m-beta-D-ManNAc-(1-&gt;4)-alpha-D-GlcNAc-P-peptidoglycan + n H2O = [(2-GlcNAc)-Rib-ol-P]n-[Gro-P]m-beta-D-ManNAc-(1-&gt;4)-alpha-D-GlcNAc-P-peptidoglycan + n D-alanine.. Catalyzes the liberation of D-alanyl moieties present on wall teichoic acid (WTA) and lipoteichoic acid (LTA). Affects the methicillin resistance level and autolysis in the presence of Triton X-100 as well as the cell wall structure. This chain is Teichoic acid D-alanine hydrolase (fmtA), found in Staphylococcus aureus (strain Mu50 / ATCC 700699).